A 457-amino-acid chain; its full sequence is MKIYNTLSGKLEEFVPLENDKVKMYVCGITPQSEPHIGHAMSYINFDVIRRYLTYKGYRVKYIQNFTDIDDKIIAKANAQGIEPSTLAERNIGVFLDAMAALNITPADYYPRATQEVPKIIEIVSGLIDKGYAYAVDGSVYLRVQKVDGYGKLSHRTLEQMMAGARVEIDEEKEYPMDFALWKATKPGEPSWESPWGLGRPGWHIECSAMSLRYLGEQIDIHGGGQDLIFPHHENEIAQSECFSGVKPFVKYWLHNGLLKLGEEKMSKSLGNLVTIKEALSRYSADALRIFVLSSSYRNPLTYSEEALEAAEKGAERLRQTAARKDNPQFKETTVDTKAYRERFTQYMDNDFNTSAALATIFDLSRELNRIEGEAGKSTDGQKLFKELADILGLSLIVAESKTGTDVAPFIELLIELRKDLRVAKQYQLADKIRTSLDTAGILLEDSAGGTVWKVKK.

Cys27 is a Zn(2+) binding site. Residues 29 to 39 (ITPQSEPHIGH) carry the 'HIGH' region motif. Zn(2+)-binding residues include Cys207, His232, and Glu236. The 'KMSKS' region motif lies at 265–269 (KMSKS). Residue Lys268 participates in ATP binding.

The protein belongs to the class-I aminoacyl-tRNA synthetase family. As to quaternary structure, monomer. Zn(2+) serves as cofactor.

It localises to the cytoplasm. The catalysed reaction is tRNA(Cys) + L-cysteine + ATP = L-cysteinyl-tRNA(Cys) + AMP + diphosphate. The chain is Cysteine--tRNA ligase from Dehalococcoides mccartyi (strain ATCC BAA-2100 / JCM 16839 / KCTC 5957 / BAV1).